The following is a 1347-amino-acid chain: MIQQFTLLFLYLSFATAKAITGIFNSIDSLTWSNAGNYAFKGPGYPTWNAVLGWSLDGTSANPGDTFILNMPCVFKFTASQKSVDLTADGVKYATCQFYSGEEFTTFSSLKCTVNNNLRSSIKALGTVTLPIAFNVGGTGSSVDLEDSKCFTAGTNTVTFNDGSKKLSIAVNFEKSTVDQSGYLTTSRFMPSLNKIATLYVAPQCENGYTSGTMGFSTSYGDVAIDCSNVHIGISKGVNDWNHPVTSESFSYTKSCSSFGISITYQNVPAGYRPFIDAYISPSDNNQYQLSYKNDYTCVDDYWQHAPFTLKWTGYKNSDAGSNGIVIVATTRTVTDSTTAVTTLPFNPSVDKTKTIEILQPIPTTTITTSYVGVTTSYSTKTAPIGETATVIVDVPYHTTTTVTSEWTGTITTTTTRTNPTDSIDTVVVQVPLPNPTTTTTQFWSESFTSTTTITNSLKGTDSVIVREPHNPTVTTTEFWSESYATTETITNGPEGTDSVIVREPHNPTVTTTEFWSESYATTETVTNKPEGTDSVIIKEPHNPTVTTTEFWSESYATTETITTGPLGTDSIVIHDPLEESSSTTAIESSDSNISSSAQESSSSVEQSSSIVGLSSSSDIPLSSDMPSSSSTGLTSSESSTVSSYDSDSSSSSELSTFSSSESYSSSISDTTNFWDSSSSDLESTSITWSSSIDAQSSQSVQSVSNSISTSQETTSSSGEESNTSVTDILVSSDASSILNSDISSYYPSSTISLSDDFPHTIAGEPDSRSSSSIASTVEISSDLVSLTSDPTSSFDSSSSLNSDSSSSPFSDESDISASSSFSTLVAPSFSLSSSSSLSLTYPHYVNSTTYHASESESSSVASPSMASESANDDTHTLSESTDTTSSIGTDSSTVTFCRRDNGDGCIVTGMPSSSIDSEQTSDVTTTSSFVASSTPTSAEQSITDNPNIDSSQTSASSSTKSSVSVSDTVVNSISLSETSTLSSDDSTSSDTSISSTTNSDTGNINAGSSHTSTASIKESSIQKTGVMLSSSYLSTKLSSTSDITTELITTELITTELTTIEDNEPNTFTSTPSSHSEIFSSDNSVLSKQVDRESTIKTSPTTDVTTVSSLSVHSTEASTATLGENSFSNVASTPSNIATSLRSTSSSSNHATESSGTVKSEASAEAIPSPPTSTDNRLSYSTEEAKGITYANSGSTNNLITESQVAAPTDSTSVLIENPVVTSTFDDNSSAAVDQPSKTKSIEESIMNPDSTNETNNGFIATLSQAQVPNSLIHSESISTTMAKTTDASINGDSAASNSQPTTLIQQVATSSYNQPLITTYAGSSSATKHPSWLLKFISVALFFFL.

The first 19 residues, 1–19, serve as a signal peptide directing secretion; it reads MIQQFTLLFLYLSFATAKA. Cystine bridges form between cysteine 73-cysteine 150, cysteine 96-cysteine 112, cysteine 205-cysteine 298, and cysteine 227-cysteine 256. ALS repeat units lie at residues 365-396, 401-432, 438-469, 474-505, 510-541, and 546-577; these read TTIT…VDVP, TTVT…VQVP, TTTT…VREP, VTTT…VREP, VTTT…IKEP, and VTTT…IHDP. 3 disordered regions span residues 580 to 678, 704 to 725, and 789 to 813; these read ESSS…WDSS, VSNS…SNTS, and SDPT…FSDE. Asparagine 593 and asparagine 723 each carry an N-linked (GlcNAc...) asparagine glycan. Residue asparagine 847 is glycosylated (N-linked (GlcNAc...) asparagine). Disordered stretches follow at residues 855–896, 909–964, 977–1021, 1062–1111, and 1139–1180; these read ESES…STVT, TGMP…KSSV, SETS…KESS, EDNE…VSSL, and ATSL…NRLS. Composition is skewed to low complexity over residues 856-870, 879-896, and 921-939; these read SESS…ASES, SEST…STVT, and TSDV…PTSA. Over residues 940-950 the composition is skewed to polar residues; it reads EQSITDNPNID. Low complexity-rich tracts occupy residues 951–964 and 977–1002; these read SSQT…KSSV and SETS…NSDT. Polar residues-rich tracts occupy residues 1003-1021 and 1066-1088; these read GNIN…KESS and PNTF…SVLS. 2 stretches are compositionally biased toward low complexity: residues 1097 to 1111 and 1140 to 1158; these read IKTS…VSSL and TSLR…SSGT. Asparagine 1229 and asparagine 1254 each carry an N-linked (GlcNAc...) asparagine glycan. Serine 1326 carries the GPI-anchor amidated serine lipid modification. Positions 1327-1347 are cleaved as a propeptide — removed in mature form; the sequence is SATKHPSWLLKFISVALFFFL.

This sequence belongs to the ALS family. As to quaternary structure, forms homodimers through the tandem repeats. Aggregates in amyloid-like structures, with self-propagating secondary-structure changes, amyloid-characteristic dye binding, and induced birefringence. Post-translationally, the GPI-anchor is attached to the protein in the endoplasmic reticulum and serves to target the protein to the cell surface. There, the glucosamine-inositol phospholipid moiety is cleaved off and the GPI-modified mannoprotein is covalently attached via its lipidless GPI glycan remnant to the 1,6-beta-glucan of the outer cell wall layer.

The protein resides in the cell membrane. Its subcellular location is the secreted. The protein localises to the cell wall. Cell surface adhesion protein which mediates both yeast-to-host tissue adherence and yeast aggregation. Plays an important role in the pathogenesis of C.albicans infections. Forms amyloid structures, essential for cell-cell association and cell-substrate adhesion to polystyrene. The chain is Agglutinin-like protein 5 (ALS5) from Candida albicans (strain SC5314 / ATCC MYA-2876) (Yeast).